Here is a 615-residue protein sequence, read N- to C-terminus: RNA polymerase sigma factor RpoD (615 aa).

The segment at 177 to 215 (APTATHVGSELSQEDLDDDEDEDEEDGDDDAADDDNSID) is disordered. Acidic residues predominate over residues 188 to 214 (SQEDLDDDEDEDEEDGDDDAADDDNSI). The interval 381–451 (MVEANLRLVI…TRSIADQART (71 aa)) is sigma-70 factor domain-2. The Interaction with polymerase core subunit RpoC signature appears at 405–408 (DLIQ). Residues 460 to 536 (ETINKLNRIS…DTTLELPLDS (77 aa)) form a sigma-70 factor domain-3 region. The interval 549 to 602 (VLAGLTAREAKVLRMRFGIDMNTDHTLEEVGKQFDVTRERIRQIEAKALRKLRH) is sigma-70 factor domain-4. The H-T-H motif DNA-binding region spans 575-594 (LEEVGKQFDVTRERIRQIEA).

It belongs to the sigma-70 factor family. RpoD/SigA subfamily. Interacts transiently with the RNA polymerase catalytic core.

It localises to the cytoplasm. Sigma factors are initiation factors that promote the attachment of RNA polymerase to specific initiation sites and are then released. This sigma factor is the primary sigma factor during exponential growth. This Salmonella typhi protein is RNA polymerase sigma factor RpoD.